The sequence spans 258 residues: Small ribosomal subunit protein mS35 (258 aa).

A mitochondrion-targeting transit peptide spans 1–39 (MAFNPLLSLLKADAIFLGQLSKSSFCATSRAFSVFYFTR).

The protein belongs to the mitochondrion-specific ribosomal protein mS35 family. In terms of assembly, component of the mitochondrial small ribosomal subunit (mt-SSU). Mature yeast 74S mitochondrial ribosomes consist of a small (37S) and a large (54S) subunit. The 37S small subunit contains a 15S ribosomal RNA (15S mt-rRNA) and at least 32 different proteins. The 54S large subunit contains a 21S rRNA (21S mt-rRNA) and at least 45 different proteins.

It is found in the mitochondrion. In terms of biological role, component of the mitochondrial ribosome (mitoribosome), a dedicated translation machinery responsible for the synthesis of mitochondrial genome-encoded proteins, including at least some of the essential transmembrane subunits of the mitochondrial respiratory chain. The mitoribosomes are attached to the mitochondrial inner membrane and translation products are cotranslationally integrated into the membrane. In Schizosaccharomyces pombe (strain 972 / ATCC 24843) (Fission yeast), this protein is Small ribosomal subunit protein mS35 (rsm24).